A 211-amino-acid chain; its full sequence is Pyridoxine/pyridoxamine 5'-phosphate oxidase (211 aa).

Substrate is bound by residues 7 to 10 (RRDY) and Lys-65. FMN contacts are provided by residues 60–65 (RIVLLK), 75–76 (YT), Arg-81, Lys-82, and Gln-104. Substrate contacts are provided by Tyr-122, Arg-126, and Ser-130. Residues 139–140 (QS) and Trp-184 each bind FMN. 190–192 (RLH) provides a ligand contact to substrate. Arg-194 is a binding site for FMN.

This sequence belongs to the pyridoxamine 5'-phosphate oxidase family. In terms of assembly, homodimer. It depends on FMN as a cofactor.

It catalyses the reaction pyridoxamine 5'-phosphate + O2 + H2O = pyridoxal 5'-phosphate + H2O2 + NH4(+). The enzyme catalyses pyridoxine 5'-phosphate + O2 = pyridoxal 5'-phosphate + H2O2. It participates in cofactor metabolism; pyridoxal 5'-phosphate salvage; pyridoxal 5'-phosphate from pyridoxamine 5'-phosphate: step 1/1. The protein operates within cofactor metabolism; pyridoxal 5'-phosphate salvage; pyridoxal 5'-phosphate from pyridoxine 5'-phosphate: step 1/1. Its function is as follows. Catalyzes the oxidation of either pyridoxine 5'-phosphate (PNP) or pyridoxamine 5'-phosphate (PMP) into pyridoxal 5'-phosphate (PLP). The protein is Pyridoxine/pyridoxamine 5'-phosphate oxidase of Aliivibrio fischeri (strain ATCC 700601 / ES114) (Vibrio fischeri).